A 361-amino-acid polypeptide reads, in one-letter code: Homocitrate synthase (361 aa).

A Pyruvate carboxyltransferase domain is found at 1-249 (MILDSTLREG…VKKYRLDKLY (249 aa)). Residue Arg-8 participates in 2-oxoglutarate binding. Glu-9 provides a ligand contact to Mg(2+). Residues His-68, Arg-128, and Thr-162 each contribute to the 2-oxoglutarate site. Residues His-188 and His-190 each contribute to the Mg(2+) site. The active-site Proton acceptor is the His-282.

This sequence belongs to the alpha-IPM synthase/homocitrate synthase family. Homocitrate synthase LYS20/LYS21 subfamily. The cofactor is Mg(2+). Mn(2+) serves as cofactor.

It carries out the reaction acetyl-CoA + 2-oxoglutarate + H2O = (2R)-homocitrate + CoA + H(+). Its pathway is amino-acid biosynthesis; L-lysine biosynthesis via AAA pathway; L-alpha-aminoadipate from 2-oxoglutarate: step 1/5. Functionally, catalyzes the aldol-type condensation of 2-oxoglutarate with acetyl-CoA to yield homocitrate. Carries out the first step of the alpha-aminoadipate (AAA) lysine biosynthesis pathway. The sequence is that of Homocitrate synthase from Pyrococcus horikoshii (strain ATCC 700860 / DSM 12428 / JCM 9974 / NBRC 100139 / OT-3).